Here is a 1234-residue protein sequence, read N- to C-terminus: DNA-directed RNA polymerase subunit beta (1234 aa).

A disordered region spans residues 1169-1234; sequence ESVDEDADEL…LDLDDFGDEH (66 aa). Acidic residues-rich tracts occupy residues 1171–1180 and 1191–1234; these read VDEDADELEV and EKEE…GDEH.

Belongs to the RNA polymerase beta chain family. The RNAP catalytic core consists of 2 alpha, 1 beta, 1 beta' and 1 omega subunit. When a sigma factor is associated with the core the holoenzyme is formed, which can initiate transcription.

It catalyses the reaction RNA(n) + a ribonucleoside 5'-triphosphate = RNA(n+1) + diphosphate. Its function is as follows. DNA-dependent RNA polymerase catalyzes the transcription of DNA into RNA using the four ribonucleoside triphosphates as substrates. The chain is DNA-directed RNA polymerase subunit beta from Clostridium botulinum (strain Langeland / NCTC 10281 / Type F).